We begin with the raw amino-acid sequence, 235 residues long: RNA polymerase sigma factor SigI7 (235 aa).

A Polymerase core binding motif is present at residues 49–62 (DELSIALMAFVETI). The segment at residues 191–210 (VAEIEQSLKIPRKTIERARK) is a DNA-binding region (H-T-H motif).

This sequence belongs to the sigma-70 factor family. SigI subfamily. In terms of assembly, interacts with RsgI7.

Its subcellular location is the cytoplasm. Negatively regulated by the anti-sigma-I factor RsgI7. In terms of biological role, sigma factors are initiation factors that promote the attachment of RNA polymerase to specific initiation sites and are then released. The polypeptide is RNA polymerase sigma factor SigI7 (Acetivibrio thermocellus (strain ATCC 27405 / DSM 1237 / JCM 9322 / NBRC 103400 / NCIMB 10682 / NRRL B-4536 / VPI 7372) (Clostridium thermocellum)).